Consider the following 186-residue polypeptide: UPF0301 protein Sfri_2850 (186 aa).

It belongs to the UPF0301 (AlgH) family.

The protein is UPF0301 protein Sfri_2850 of Shewanella frigidimarina (strain NCIMB 400).